The chain runs to 255 residues: Phosphoribosyl isomerase A (255 aa).

The active-site Proton acceptor is the Asp-21. Asp-140 (proton donor) is an active-site residue.

This sequence belongs to the HisA/HisF family.

The protein resides in the cytoplasm. It carries out the reaction 1-(5-phospho-beta-D-ribosyl)-5-[(5-phospho-beta-D-ribosylamino)methylideneamino]imidazole-4-carboxamide = 5-[(5-phospho-1-deoxy-D-ribulos-1-ylimino)methylamino]-1-(5-phospho-beta-D-ribosyl)imidazole-4-carboxamide. The catalysed reaction is N-(5-phospho-beta-D-ribosyl)anthranilate = 1-(2-carboxyphenylamino)-1-deoxy-D-ribulose 5-phosphate. Its pathway is amino-acid biosynthesis; L-histidine biosynthesis; L-histidine from 5-phospho-alpha-D-ribose 1-diphosphate: step 4/9. The protein operates within amino-acid biosynthesis; L-tryptophan biosynthesis; L-tryptophan from chorismate: step 3/5. Functionally, involved in both the histidine and tryptophan biosynthetic pathways. This chain is Phosphoribosyl isomerase A, found in Mycolicibacterium vanbaalenii (strain DSM 7251 / JCM 13017 / BCRC 16820 / KCTC 9966 / NRRL B-24157 / PYR-1) (Mycobacterium vanbaalenii).